The chain runs to 373 residues: Chorismate synthase (373 aa).

Position 46 (Arg-46) interacts with NADP(+). Residues 123–125, 250–251, Gly-295, 310–314, and Arg-337 each bind FMN; these read RSS, NA, and KPTPS.

Belongs to the chorismate synthase family. FMNH2 serves as cofactor.

The catalysed reaction is 5-O-(1-carboxyvinyl)-3-phosphoshikimate = chorismate + phosphate. The protein operates within metabolic intermediate biosynthesis; chorismate biosynthesis; chorismate from D-erythrose 4-phosphate and phosphoenolpyruvate: step 7/7. Functionally, catalyzes the anti-1,4-elimination of the C-3 phosphate and the C-6 proR hydrogen from 5-enolpyruvylshikimate-3-phosphate (EPSP) to yield chorismate, which is the branch point compound that serves as the starting substrate for the three terminal pathways of aromatic amino acid biosynthesis. This reaction introduces a second double bond into the aromatic ring system. This is Chorismate synthase from Methanococcus aeolicus (strain ATCC BAA-1280 / DSM 17508 / OCM 812 / Nankai-3).